We begin with the raw amino-acid sequence, 307 residues long: Homoserine kinase (307 aa).

Position 86–96 (86–96 (PIARGLGSSAA)) interacts with ATP.

This sequence belongs to the GHMP kinase family. Homoserine kinase subfamily.

The protein localises to the cytoplasm. It catalyses the reaction L-homoserine + ATP = O-phospho-L-homoserine + ADP + H(+). It functions in the pathway amino-acid biosynthesis; L-threonine biosynthesis; L-threonine from L-aspartate: step 4/5. In terms of biological role, catalyzes the ATP-dependent phosphorylation of L-homoserine to L-homoserine phosphate. This is Homoserine kinase from Petrotoga mobilis (strain DSM 10674 / SJ95).